The sequence spans 282 residues: Deoxyribonuclease-1 (282 aa).

The N-terminal stretch at 1-20 is a signal peptide; sequence MARLVLELLAAALLLRVAAT. Asn38 carries an N-linked (GlcNAc...) asparagine glycan. Residue Glu98 is part of the active site. Residues Cys121 and Cys124 are joined by a disulfide bond. His154 is a catalytic residue. Cysteines 193 and 229 form a disulfide.

This sequence belongs to the DNase I family. Requires Ca(2+) as cofactor. It depends on Mg(2+) as a cofactor. In terms of processing, N-glycosylated.

The protein resides in the secreted. The protein localises to the zymogen granule. Its subcellular location is the nucleus envelope. It carries out the reaction Endonucleolytic cleavage to 5'-phosphodinucleotide and 5'-phosphooligonucleotide end-products.. Serum endocuclease secreted into body fluids by a wide variety of exocrine and endocrine organs. Expressed by non-hematopoietic tissues and preferentially cleaves protein-free DNA. Among other functions, seems to be involved in cell death by apoptosis. Binds specifically to G-actin and blocks actin polymerization. In Gallus gallus (Chicken), this protein is Deoxyribonuclease-1 (DNASE1).